Consider the following 75-residue polypeptide: Tetrahydromethanopterin S-methyltransferase subunit F (75 aa).

A helical transmembrane segment spans residues 53–73 (FAGLACGMVFAGVLLVPLLLL).

Belongs to the MtrF family. In terms of assembly, the complex is composed of 8 subunits; MtrA, MtrB, MtrC, MtrD, MtrE, MtrF, MtrG and MtrH.

It is found in the cell membrane. The catalysed reaction is 5-methyl-5,6,7,8-tetrahydromethanopterin + coenzyme M + 2 Na(+)(in) = 5,6,7,8-tetrahydromethanopterin + methyl-coenzyme M + 2 Na(+)(out). It functions in the pathway one-carbon metabolism; methanogenesis from CO(2); methyl-coenzyme M from 5,10-methylene-5,6,7,8-tetrahydromethanopterin: step 2/2. Its function is as follows. Part of a complex that catalyzes the formation of methyl-coenzyme M and tetrahydromethanopterin from coenzyme M and methyl-tetrahydromethanopterin. This is an energy-conserving, sodium-ion translocating step. The chain is Tetrahydromethanopterin S-methyltransferase subunit F from Methanopyrus kandleri (strain AV19 / DSM 6324 / JCM 9639 / NBRC 100938).